A 290-amino-acid polypeptide reads, in one-letter code: Urease accessory protein UreD (290 aa).

It belongs to the UreD family. In terms of assembly, ureD, UreF and UreG form a complex that acts as a GTP-hydrolysis-dependent molecular chaperone, activating the urease apoprotein by helping to assemble the nickel containing metallocenter of UreC. The UreE protein probably delivers the nickel.

The protein localises to the cytoplasm. Required for maturation of urease via the functional incorporation of the urease nickel metallocenter. This chain is Urease accessory protein UreD, found in Paenarthrobacter aurescens (strain TC1).